The following is an 861-amino-acid chain: Probable linoleate 9S-lipoxygenase 7 (861 aa).

The region spanning 29–160 is the PLAT domain; the sequence is NVLDFTDLAG…NYKSDRIFFA (132 aa). Residues 163–861 form the Lipoxygenase domain; it reads PYLPSETPEL…GKGIPNSVSI (699 aa). Residues 220–246 are disordered; it reads TLGGSAEYPYPRRGRTGRPPTRTDPKS. 5 residues coordinate Fe cation: His-522, His-527, His-713, Asn-717, and Ile-861.

The protein belongs to the lipoxygenase family. As to quaternary structure, monomer. The cofactor is Fe cation. Expressed in tubers. Detected in sprouts and flowers. but not in leaves or stems.

Its subcellular location is the cytoplasm. It carries out the reaction (9Z,12Z)-octadecadienoate + O2 = (9S)-hydroperoxy-(10E,12Z)-octadecadienoate. Its pathway is lipid metabolism; oxylipin biosynthesis. Plant lipoxygenases may be involved in a number of diverse aspects of plant physiology including growth and development, pest resistance, and senescence or responses to wounding. Catalyzes the hydroperoxidation of lipids containing a cis,cis-1,4-pentadiene structure. This chain is Probable linoleate 9S-lipoxygenase 7 (LOX1.7), found in Solanum tuberosum (Potato).